The primary structure comprises 1320 residues: CAP-Gly domain-containing linker protein 1 (1320 aa).

Positions 1-53 are disordered; sequence MSMLKPSGLKAPTKILKPGSTALKTPAAAAAPLEKTVPSEKASGPPSSETQEE. Over residues 21–35 the composition is skewed to low complexity; it reads TALKTPAAAAAPLEK. Phosphoserine is present on serine 48. Position 50 is a phosphothreonine (threonine 50). The region spanning 78 to 120 is the CAP-Gly 1 domain; it reads GETQFAPGQWAGIVLDEPIGKNDGSVAGVRYFQCEPLKGIFTR. The important for tubulin binding stretch occupies residues 97–101; it reads GKNDG. Serine 146 is subject to Phosphoserine. Positions 156–171 are enriched in polar residues; the sequence is VSSSPATPSNIPQKPS. A disordered region spans residues 156 to 181; sequence VSSSPATPSNIPQKPSQPVAKETSAT. Phosphothreonine is present on threonine 181. Phosphoserine is present on residues serine 194, serine 196, serine 199, and serine 203. Positions 231–273 constitute a CAP-Gly 2 domain; it reads GETDFAKGEWCGVELDEPLGKNDGAVAGTRYFQCQPKYGLFAP. A compositionally biased stretch (low complexity) spans 301-331; that stretch reads TTPASLKRSPSASSLSSMSSVASSVSSKPSR. The interval 301–338 is disordered; sequence TTPASLKRSPSASSLSSMSSVASSVSSKPSRTGLLTET. Serine 309 carries the post-translational modification Phosphoserine. Serine 311 is subject to Phosphoserine; by PKA. A phosphoserine mark is found at serine 314 and serine 347. Residues 1089-1109 form a disordered region; sequence SLPSNTLRESEYRKDADEEKA. The span at 1096 to 1109 shows a compositional bias: basic and acidic residues; the sequence is RESEYRKDADEEKA. Position 1116 is a phosphoserine (serine 1116). The segment at 1178–1201 is disordered; it reads KRQLSSSSGNTDVQTEEDERAQES. The segment covering 1180-1190 has biased composition (polar residues); the sequence is QLSSSSGNTDV. Position 1246 is a phosphoserine (serine 1246). The CCHC-type zinc-finger motif lies at 1299–1316; that stretch reads PYCEICEMFGHWATNCND.

Interacts with MTOR; phosphorylates and regulates CLIP1. Interacts (via CAP-Gly domains) with tubulin and TUBA1B. Interacts with SLAIN2. Interacts with MAPRE1 and MAPRE3. Interacts (via zinc finger) with DCTN1. Binds preferentially to tyrosinated microtubules, and only marginally to detyrosinated microtubules. Post-translationally, phosphorylated. Phosphorylation induces conformational changes by increasing the affinity of the N-terminus for C-terminus, resulting in inhibition of its function thus decreasing its binding to microtubules and DCTN1. Exhibits a folded, autoinhibited conformation when phosphorylated and an open conformation when dephosphorylated with increased binding affinity to microtubules and DCTN1. Phosphorylation regulates its recruitment to tyrosinated microtubules and the recruitment of vesicular cargo to microtubules in neurons. Phosphorylation by MTOR may positively regulate CLIP1 association with microtubules.

It localises to the cytoplasm. It is found in the cytoskeleton. Its subcellular location is the cytoplasmic vesicle membrane. The protein resides in the cell projection. The protein localises to the ruffle. Functionally, binds to the plus end of microtubules and regulates the dynamics of the microtubule cytoskeleton. Promotes microtubule growth and microtubule bundling. Links cytoplasmic vesicles to microtubules and thereby plays an important role in intracellular vesicle trafficking. Plays a role macropinocytosis and endosome trafficking. This Rattus norvegicus (Rat) protein is CAP-Gly domain-containing linker protein 1 (Clip1).